Reading from the N-terminus, the 165-residue chain is Neurotrophin-3 (165 aa).

Positions isoleucine 1–serine 3 are cleaved as a signal peptide. Positions threonine 4–arginine 119 are excised as a propeptide. Asparagine 112 carries an N-linked (GlcNAc...) asparagine glycan.

Belongs to the NGF-beta family.

The protein localises to the secreted. Its function is as follows. Seems to promote the survival of visceral and proprioceptive sensory neurons. The chain is Neurotrophin-3 (NTF3) from Aspidites melanocephalus (Black-headed python).